Here is a 233-residue protein sequence, read N- to C-terminus: Large ribosomal subunit protein uL1 (233 aa).

This sequence belongs to the universal ribosomal protein uL1 family. As to quaternary structure, part of the 50S ribosomal subunit.

Binds directly to 23S rRNA. The L1 stalk is quite mobile in the ribosome, and is involved in E site tRNA release. In terms of biological role, protein L1 is also a translational repressor protein, it controls the translation of the L11 operon by binding to its mRNA. This Laribacter hongkongensis (strain HLHK9) protein is Large ribosomal subunit protein uL1.